The primary structure comprises 417 residues: Serine/threonine-protein kinase PkaB (417 aa).

The region spanning 9-270 (YTAHQILGRG…ELSARLRELL (262 aa)) is the Protein kinase domain. Residues 15 to 23 (LGRGSAGTV) and Lys36 contribute to the ATP site. The Proton acceptor role is filled by Asp130. 2 disordered regions span residues 279-371 (LDVD…RAAT) and 395-417 (LATGGDEDGGGPQDTRNSAPAAP). The span at 280-293 (DVDEPDAEQPEDAP) shows a compositional bias: acidic residues. 2 stretches are compositionally biased toward low complexity: residues 294–308 (DASAASPAAPVSTAE) and 349–368 (GTARAPRASGAPRPGSARNR). Polar residues predominate over residues 408-417 (DTRNSAPAAP).

The protein belongs to the protein kinase superfamily. Ser/Thr protein kinase family. Post-translationally, autophosphorylated mainly at Thr.

It carries out the reaction L-seryl-[protein] + ATP = O-phospho-L-seryl-[protein] + ADP + H(+). It catalyses the reaction L-threonyl-[protein] + ATP = O-phospho-L-threonyl-[protein] + ADP + H(+). This is Serine/threonine-protein kinase PkaB (pkaB) from Streptomyces coelicolor (strain ATCC BAA-471 / A3(2) / M145).